A 192-amino-acid polypeptide reads, in one-letter code: Ion-translocating oxidoreductase complex subunit A (192 aa).

6 helical membrane-spanning segments follow: residues 5-25 (LLLL…FLGL), 39-59 (IGMS…SYLV), 65-85 (LPFD…AVVV), 102-122 (ALGI…VALL), 134-154 (AIFG…FSAM), and 171-191 (AIAM…TGLV).

Belongs to the NqrDE/RnfAE family. In terms of assembly, the complex is composed of six subunits: RnfA, RnfB, RnfC, RnfD, RnfE and RnfG.

It localises to the cell inner membrane. Part of a membrane-bound complex that couples electron transfer with translocation of ions across the membrane. In Shewanella pealeana (strain ATCC 700345 / ANG-SQ1), this protein is Ion-translocating oxidoreductase complex subunit A.